The following is a 1015-amino-acid chain: Protein HIRA (1015 aa).

WD repeat units follow at residues 11–53 (HNGK…QEDD) and 68–107 (NHLA…GPST). At S111 the chain carries Phosphoserine. 5 WD repeats span residues 129–168 (SHSG…EILA), 172–211 (GHSG…LETS), 220–263 (GGTT…TNMD), 266–322 (GHRK…PLVV), and 326–367 (LFDK…DPLS). Positions 408–431 (QQQQQLDQKNATTRETSSASSVTG) are disordered. Over residues 413 to 431 (LDQKNATTRETSSASSVTG) the composition is skewed to polar residues. The tract at residues 421–479 (RETSSASSVTGVVNGESLEDIRKNLLKKQVETRTADGRRRITPLCIAQLDTGDFSTAFF) is interaction with ASF1A. Residues 421 to 727 (RETSSASSVT…RLKCNREGKE (307 aa)) form an interaction with CCNA1 region. The required for repression of histone gene transcription stretch occupies residues 439-475 (EDIRKNLLKKQVETRTADGRRRITPLCIAQLDTGDFS). Low complexity-rich tracts occupy residues 494 to 507 (SSPS…LDSS) and 540 to 556 (ATST…TTPS). A disordered region spans residues 494–558 (SSPSGQQLLP…PSVLTTPSKI (65 aa)). S548 carries the post-translational modification Phosphoserine. At T554 the chain carries Phosphothreonine. S556 carries the phosphoserine modification. Residue T575 is modified to Phosphothreonine. Residues S583, S608, S609, S610, S612, S659, and S673 each carry the phosphoserine modification. 2 interaction with PAX3 regions span residues 593–737 (KEQN…SRVL) and 738–826 (TAAG…SQIL). The interaction with histone H2B stretch occupies residues 594 to 824 (EQNLVKELRS…LSGSDMTVSQ (231 aa)). Residues 603 to 617 (SRELESSSDSDEKVH) show a composition bias toward basic and acidic residues. A disordered region spans residues 603–623 (SRELESSSDSDEKVHLAKPSS). The segment at 736 to 1015 (VLTAAGSCDV…QEQLDILRDK (280 aa)) is interaction with histone H4.

It belongs to the WD repeat HIR1 family. In terms of assembly, interacts with CCNA1, HIRIP3 and NFU1/HIRIP5. Part of a complex which includes ASF1A, CABIN1, histone H3.3, histone H4 and UBN1. Interacts with histone H2B, histone H3-3B, PAX3 and PAX7. In terms of processing, sumoylated. Post-translationally, phosphorylated by CDK2/CCNA1 and CDK2/CCNE1 on Thr-554 in vitro. Also phosphorylated on Thr-554 in vivo. As to expression, expressed in cerebrum, cerebellum, heart, kidney, liver, lung and spleen.

The protein resides in the nucleus. Its subcellular location is the PML body. Functionally, required for the periodic repression of histone gene transcription during the cell cycle. Cooperates with ASF1A to promote replication-independent chromatin assembly. Required for the formation of senescence-associated heterochromatin foci (SAHF) and efficient senescence-associated cell cycle exit. The protein is Protein HIRA (Hira) of Mus musculus (Mouse).